The chain runs to 213 residues: G2/mitotic-specific cyclin-1 (213 aa).

The tract at residues 1 to 23 (MKFSEEKNVSNNPTNFEGGLDSR) is disordered.

The protein belongs to the cyclin family. Cyclin AB subfamily. As to quaternary structure, interacts with the CDC2 protein kinase to form a serine/threonine kinase holoenzyme complex also known as maturation promoting factor (MPF). The cyclin subunit imparts substrate specificity to the complex. In terms of tissue distribution, only expressed in organs with dividing cells.

Functionally, essential for the control of the cell cycle at the G2/M (mitosis) transition. The sequence is that of G2/mitotic-specific cyclin-1 from Medicago sativa (Alfalfa).